Reading from the N-terminus, the 443-residue chain is Xaa-Pro dipeptidase (443 aa).

Mn(2+)-binding residues include aspartate 246, aspartate 257, histidine 339, glutamate 384, and glutamate 423.

It belongs to the peptidase M24B family. Bacterial-type prolidase subfamily. Requires Mn(2+) as cofactor.

The catalysed reaction is Xaa-L-Pro dipeptide + H2O = an L-alpha-amino acid + L-proline. In terms of biological role, splits dipeptides with a prolyl residue in the C-terminal position. The polypeptide is Xaa-Pro dipeptidase (Escherichia fergusonii (strain ATCC 35469 / DSM 13698 / CCUG 18766 / IAM 14443 / JCM 21226 / LMG 7866 / NBRC 102419 / NCTC 12128 / CDC 0568-73)).